A 1177-amino-acid polypeptide reads, in one-letter code: Phospholipid-transporting ATPase IF (1177 aa).

The Cytoplasmic portion of the chain corresponds to 1–55 (MWRWIRQQLGFDPPHQSDTRTIYVANRFPQNGLYTPQKFIDNRIISSKYTVWNFV). A helical membrane pass occupies residues 56–77 (PKNLFEQFRRVANFYFLIIFLV). Residues 78-82 (QLMID) lie on the Extracellular side of the membrane. Residues 83–104 (TPTSPVTSGLPLFFVITVTAIK) traverse the membrane as a helical segment. Topologically, residues 105 to 289 (QGYEDWLRHN…SAVEKSMNTF (185 aa)) are cytoplasmic. The chain crosses the membrane as a helical span at residues 290-311 (LIIYLVILISEAVISTILKYTW). The Extracellular portion of the chain corresponds to 312–341 (QAEEKWDEPWYNQKTEHQRNSSKILRFISD). A helical membrane pass occupies residues 342–359 (FLAFLVLYNFIIPISLYV). At 360–876 (TVEMQKFLGS…HGHFYYIRIA (517 aa)) the chain is on the cytoplasmic side. Catalysis depends on Asp407, which acts as the 4-aspartylphosphate intermediate. 12 residues coordinate ATP: Asp407, Lys408, Thr409, Glu531, Phe572, Lys595, Arg626, Thr706, Gly707, Asp708, Arg794, and Lys800. Asp407 contributes to the Mg(2+) binding site. Thr409 contacts Mg(2+). Asp821 provides a ligand contact to Mg(2+). Residues Asn824 and Asp825 each contribute to the ATP site. Asp825 serves as a coordination point for Mg(2+). A helical transmembrane segment spans residues 877-898 (TLVQYFFYKNVCFITPQFLYQF). At 899–910 (YCLFSQQTLYDS) the chain is on the extracellular side. Residues 911 to 930 (VYLTLYNICFTSLPILIYSL) form a helical membrane-spanning segment. Topologically, residues 931-960 (LEQHVDPHVLQNKPTLYRDISKNRLLSIKT) are cytoplasmic. The helical transmembrane segment at 961–982 (FLYWTILGFSHAFIFFFGSYLL) threads the bilayer. The Extracellular portion of the chain corresponds to 983–997 (IGKDTSLLGNGQMFG). A helical membrane pass occupies residues 998 to 1020 (NWTFGTLVFTVMVITVTVKMALE). The Cytoplasmic portion of the chain corresponds to 1021-1025 (THFWT). A helical membrane pass occupies residues 1026-1047 (WINHLVTWGSIIFYFVFSLFYG). Over 1048-1065 (GILWPFLGSQNMYFVFIQ) the chain is Extracellular. Residues 1066–1090 (LLSSGSAWFAIILMVVTCLFLDIIK) traverse the membrane as a helical segment. Residues 1091–1177 (KVFDRHLHPT…TLSTMDSSTC (87 aa)) lie on the Cytoplasmic side of the membrane. Phosphoserine is present on Ser1154.

Belongs to the cation transport ATPase (P-type) (TC 3.A.3) family. Type IV subfamily. Component of a P4-ATPase flippase complex which consists of a catalytic alpha subunit ATP11B and an accessory beta subunit TMEM30A. Requires Mg(2+) as cofactor.

The protein localises to the recycling endosome membrane. The protein resides in the early endosome. It is found in the endoplasmic reticulum. Its subcellular location is the golgi apparatus. It localises to the trans-Golgi network. It carries out the reaction ATP + H2O + phospholipidSide 1 = ADP + phosphate + phospholipidSide 2.. The enzyme catalyses a 1,2-diacyl-sn-glycero-3-phospho-L-serine(out) + ATP + H2O = a 1,2-diacyl-sn-glycero-3-phospho-L-serine(in) + ADP + phosphate + H(+). The catalysed reaction is a 1,2-diacyl-sn-glycero-3-phosphoethanolamine(out) + ATP + H2O = a 1,2-diacyl-sn-glycero-3-phosphoethanolamine(in) + ADP + phosphate + H(+). Its activity is regulated as follows. The ATPase activity is up-regulated by aminophospholipids PS and PE. Its function is as follows. Catalytic component of a P4-ATPase flippase complex which catalyzes the hydrolysis of ATP coupled to the transport of aminophospholipids, phosphatidylserines (PS) and phosphatidylethanolamines (PE), from the outer to the inner leaflet of intracellular membranes. May contribute to the maintenance of membrane lipid asymmetry in endosome compartment. This is Phospholipid-transporting ATPase IF (ATP11B) from Homo sapiens (Human).